Here is a 95-residue protein sequence, read N- to C-terminus: Putative per-hexamer repeat protein 4 (95 aa).

The polypeptide is Putative per-hexamer repeat protein 4 (Phxr4) (Mus musculus (Mouse)).